Consider the following 309-residue polypeptide: MQTKPFRIGTRGSPLALAQAYETRSRLMAAHGLPEEMFEIVVLSTKGDRITDRALSEIGGKGLFTEELENQLLSGELDIAVHSSKDMPTVLPEGLHLSAFLPREDMRDAFIGRTAPKLLELPQGAVVGSASLRRQALIRRLRPDLNVIVFRGLVDTRLRKLEEGQADATLLAFAGLKRLGKDNVPTEILDPKEFPPAPAQGAIGVESRIGDARMDKLLAPINDRPTYDAVTCERAFLAALDGSCRTPIAGYATCEGDNLHFSGLILTPDGQTSHGVEISGNRRDALILGKKAGEEVRAKAGSNFFEGWS.

Cysteine 244 bears the S-(dipyrrolylmethanemethyl)cysteine mark.

It belongs to the HMBS family. Monomer. Dipyrromethane is required as a cofactor.

It catalyses the reaction 4 porphobilinogen + H2O = hydroxymethylbilane + 4 NH4(+). It participates in porphyrin-containing compound metabolism; protoporphyrin-IX biosynthesis; coproporphyrinogen-III from 5-aminolevulinate: step 2/4. Tetrapolymerization of the monopyrrole PBG into the hydroxymethylbilane pre-uroporphyrinogen in several discrete steps. The chain is Porphobilinogen deaminase from Agrobacterium fabrum (strain C58 / ATCC 33970) (Agrobacterium tumefaciens (strain C58)).